A 279-amino-acid polypeptide reads, in one-letter code: DegV domain-containing protein spr1019 (279 aa).

Residues 4-277 (IKIVTDSSVT…ENAWAILIRY (274 aa)) enclose the DegV domain. 2 residues coordinate hexadecanoate: Thr62 and Ser94.

May bind long-chain fatty acids, such as palmitate, and may play a role in lipid transport or fatty acid metabolism. The polypeptide is DegV domain-containing protein spr1019 (Streptococcus pneumoniae (strain ATCC BAA-255 / R6)).